The following is a 450-amino-acid chain: Akuammiline synthase 2 (450 aa).

The active-site Proton acceptor is His-154. The Nuclear localization signal motif lies at 218-225; sequence MRRFVFDA. Residue Asp-376 is the Proton acceptor of the active site.

This sequence belongs to the plant acyltransferase family. In terms of assembly, monomer.

The protein localises to the cytoplasm. The protein resides in the nucleus. The enzyme catalyses rhazimol + acetyl-CoA = akuammiline + CoA + H(+). It participates in alkaloid biosynthesis. Functionally, acyltransferase involved in the biosynthesis of akuammilan monoterpene indole alkaloids (MIAs) natural products, components with various biological properties such as antidiabetic, antibacterial, anti-inflammatory, anticancer, and antimalarial activities. Catalyzes the conversion of rhazimol to akuammiline. The protein is Akuammiline synthase 2 of Alstonia scholaris (Dogbane).